The primary structure comprises 161 residues: S-ribosylhomocysteine lyase (161 aa).

Fe cation contacts are provided by H53, H57, and C124.

The protein belongs to the LuxS family. Homodimer. It depends on Fe cation as a cofactor.

It carries out the reaction S-(5-deoxy-D-ribos-5-yl)-L-homocysteine = (S)-4,5-dihydroxypentane-2,3-dione + L-homocysteine. In terms of biological role, involved in the synthesis of autoinducer 2 (AI-2) which is secreted by bacteria and is used to communicate both the cell density and the metabolic potential of the environment. The regulation of gene expression in response to changes in cell density is called quorum sensing. Catalyzes the transformation of S-ribosylhomocysteine (RHC) to homocysteine (HC) and 4,5-dihydroxy-2,3-pentadione (DPD). In Phocaeicola vulgatus (strain ATCC 8482 / DSM 1447 / JCM 5826 / CCUG 4940 / NBRC 14291 / NCTC 11154) (Bacteroides vulgatus), this protein is S-ribosylhomocysteine lyase.